The following is a 579-amino-acid chain: Polyadenylate-binding protein, cytoplasmic and nuclear (579 aa).

The segment covering 1–10 has biased composition (basic and acidic residues); the sequence is MADITEKTAE. Residues 1–32 are disordered; that stretch reads MADITEKTAEQLENLSLQDKQEGTNEENQSET. 4 RRM domains span residues 35 to 113, 123 to 200, 216 to 293, and 319 to 396; these read ASLY…WSQR, GNIF…PHLS, TNVY…RAQK, and INLF…IAQR. The PABC domain maps to 487–566; sequence GFARNGPAAN…ASAAYESFKQ (80 aa). Residues 560 to 579 form a disordered region; that stretch reads AYESFKQEQQQPQGEEAQQA. Positions 566–579 are enriched in low complexity; it reads QEQQQPQGEEAQQA.

Belongs to the polyadenylate-binding protein type-1 family.

It is found in the cytoplasm. Its subcellular location is the nucleus. Functionally, binds the poly(A) tail of mRNA. Appears to be an important mediator of the multiple roles of the poly(A) tail in mRNA biogenesis, stability and translation. In the nucleus, involved in both mRNA cleavage and polyadenylation. Is also required for efficient mRNA export to the cytoplasm. Acts in concert with a poly(A)-specific nuclease (PAN) to affect poly(A) tail shortening, which may occur concomitantly with either nucleocytoplasmic mRNA transport or translational initiation. In the cytoplasm, stimulates translation initiation and regulates mRNA decay through translation termination-coupled poly(A) shortening, probably mediated by PAN. This is Polyadenylate-binding protein, cytoplasmic and nuclear (PAB1) from Candida glabrata (strain ATCC 2001 / BCRC 20586 / JCM 3761 / NBRC 0622 / NRRL Y-65 / CBS 138) (Yeast).